Here is a 202-residue protein sequence, read N- to C-terminus: N-(5'-phosphoribosyl)anthranilate isomerase (202 aa).

Belongs to the TrpF family.

The enzyme catalyses N-(5-phospho-beta-D-ribosyl)anthranilate = 1-(2-carboxyphenylamino)-1-deoxy-D-ribulose 5-phosphate. It functions in the pathway amino-acid biosynthesis; L-tryptophan biosynthesis; L-tryptophan from chorismate: step 3/5. This is N-(5'-phosphoribosyl)anthranilate isomerase from Listeria monocytogenes serotype 4b (strain F2365).